A 499-amino-acid polypeptide reads, in one-letter code: Trichothecene C-4 hydroxylase (499 aa).

Residues 7-29 (VGVAVQLVLTVLLASIPLRVIWN) form a helical membrane-spanning segment. Residues Asn-173 and Asn-287 are each glycosylated (N-linked (GlcNAc...) asparagine). A heme-binding site is contributed by Cys-442. Asn-473 carries an N-linked (GlcNAc...) asparagine glycan.

This sequence belongs to the cytochrome P450 family. Heme serves as cofactor.

The protein localises to the membrane. Its pathway is sesquiterpene biosynthesis; trichothecene biosynthesis. Its function is as follows. Trichothecene C-4 hydroxylase; part of the gene cluster that mediates the production of the antimicrobial trichothecene harzianum A (HA) that plays a role in Botrytis cinerea antagonistic activity and plant defense priming. The biosynthesis of harzianum A begins with the cyclization of farnesyl diphosphate to trichodiene and is catalyzed by the trichodiene synthase TRI5. Trichodiene undergoes a series of oxygenations catalyzed by the cytochrome P450 monooxygenase TRI4. TRI4 controls the addition of 3 oxygens at C-2, C-11, and the C-12, C-13-epoxide to form the intermediate isotrichodiol. Isotrichodiol then undergoes a non-enzymatic isomerization and cyclization to form 12,13-epoxytrichothec-9-ene (EPT) which is further converted to trichodermol by the cytochrome P450 monooxygenase TRI11 via C-4 hydroxylation. The last step of HA synthesis is esterification of an octatriendioyl moiety to the C-4 oxygen of trichodermol. The octatriendioyl moiety is probably produced by the polyketide synthase TRI17 and the esterification performed by the trichothecene O-acetyltransferase TRI3. In Trichoderma arundinaceum, this protein is Trichothecene C-4 hydroxylase.